Reading from the N-terminus, the 178-residue chain is Large ribosomal subunit protein uL6 (178 aa).

Belongs to the universal ribosomal protein uL6 family. As to quaternary structure, part of the 50S ribosomal subunit.

Functionally, this protein binds to the 23S rRNA, and is important in its secondary structure. It is located near the subunit interface in the base of the L7/L12 stalk, and near the tRNA binding site of the peptidyltransferase center. This Streptococcus agalactiae serotype V (strain ATCC BAA-611 / 2603 V/R) protein is Large ribosomal subunit protein uL6.